A 325-amino-acid polypeptide reads, in one-letter code: N-acetyl-gamma-glutamyl-phosphate reductase (325 aa).

Cys-135 is an active-site residue.

Belongs to the NAGSA dehydrogenase family. Type 1 subfamily.

The protein resides in the cytoplasm. It catalyses the reaction N-acetyl-L-glutamate 5-semialdehyde + phosphate + NADP(+) = N-acetyl-L-glutamyl 5-phosphate + NADPH + H(+). It functions in the pathway amino-acid biosynthesis; L-arginine biosynthesis; N(2)-acetyl-L-ornithine from L-glutamate: step 3/4. Its function is as follows. Catalyzes the NADPH-dependent reduction of N-acetyl-5-glutamyl phosphate to yield N-acetyl-L-glutamate 5-semialdehyde. The chain is N-acetyl-gamma-glutamyl-phosphate reductase from Karelsulcia muelleri (strain GWSS) (Sulcia muelleri).